The chain runs to 914 residues: Chitin synthase B (914 aa).

2 disordered regions span residues 1–67 (MAYQ…TSGY) and 112–140 (YARS…GGGL). Residues 130–140 (GGAGSGGGGGL) are compositionally biased toward gly residues. 7 consecutive transmembrane segments (helical) span residues 543 to 562 (WLNG…GRMY), 586 to 606 (ILTW…MDLV), 627 to 647 (IVNT…FILA), 662 to 682 (SFVV…YLVV), 712 to 732 (AGII…ASFM), 843 to 863 (LVTF…SDGV), and 882 to 902 (ALLW…CWFL).

This sequence belongs to the chitin synthase family. Class III subfamily.

The protein resides in the cell membrane. It catalyses the reaction [(1-&gt;4)-N-acetyl-beta-D-glucosaminyl](n) + UDP-N-acetyl-alpha-D-glucosamine = [(1-&gt;4)-N-acetyl-beta-D-glucosaminyl](n+1) + UDP + H(+). Polymerizes chitin, a structural polymer of the cell wall and septum, by transferring the sugar moiety of UDP-GlcNAc to the non-reducing end of the growing chitin polymer. Plays an important role in septal growth or maintenance. Mediates colony spore formation. The polypeptide is Chitin synthase B (Aspergillus niger (strain ATCC MYA-4892 / CBS 513.88 / FGSC A1513)).